The primary structure comprises 366 residues: tRNA/tmRNA (uracil-C(5))-methyltransferase (366 aa).

Residues Gln-190, Tyr-218, Asn-223, Glu-239, and Asp-299 each coordinate S-adenosyl-L-methionine. Catalysis depends on Cys-324, which acts as the Nucleophile. The active-site Proton acceptor is the Glu-358.

It belongs to the class I-like SAM-binding methyltransferase superfamily. RNA M5U methyltransferase family. TrmA subfamily.

It catalyses the reaction uridine(54) in tRNA + S-adenosyl-L-methionine = 5-methyluridine(54) in tRNA + S-adenosyl-L-homocysteine + H(+). The enzyme catalyses uridine(341) in tmRNA + S-adenosyl-L-methionine = 5-methyluridine(341) in tmRNA + S-adenosyl-L-homocysteine + H(+). Its function is as follows. Dual-specificity methyltransferase that catalyzes the formation of 5-methyluridine at position 54 (m5U54) in all tRNAs, and that of position 341 (m5U341) in tmRNA (transfer-mRNA). This Salmonella paratyphi C (strain RKS4594) protein is tRNA/tmRNA (uracil-C(5))-methyltransferase.